The sequence spans 355 residues: Holliday junction branch migration complex subunit RuvB (355 aa).

The segment at 4-190 is large ATPase domain (RuvB-L); sequence TDKLAAERII…FGIVARLEFY (187 aa). Residues Leu-29, Arg-30, Gly-71, Lys-74, Thr-75, Thr-76, 137-139, Arg-180, Tyr-190, and Arg-227 contribute to the ATP site; that span reads EDY. Mg(2+) is bound at residue Thr-75. The interval 191 to 261 is small ATPAse domain (RuvB-S); that stretch reads DADQLARIVR…VADAALAMLD (71 aa). Positions 264–355 are head domain (RuvB-H); that stretch reads PVGFDLMDRK…RGMWDTPAGK (92 aa). Residues Arg-300, Arg-319, and Arg-324 each contribute to the DNA site.

It belongs to the RuvB family. Homohexamer. Forms an RuvA(8)-RuvB(12)-Holliday junction (HJ) complex. HJ DNA is sandwiched between 2 RuvA tetramers; dsDNA enters through RuvA and exits via RuvB. An RuvB hexamer assembles on each DNA strand where it exits the tetramer. Each RuvB hexamer is contacted by two RuvA subunits (via domain III) on 2 adjacent RuvB subunits; this complex drives branch migration. In the full resolvosome a probable DNA-RuvA(4)-RuvB(12)-RuvC(2) complex forms which resolves the HJ.

The protein localises to the cytoplasm. The enzyme catalyses ATP + H2O = ADP + phosphate + H(+). Its function is as follows. The RuvA-RuvB-RuvC complex processes Holliday junction (HJ) DNA during genetic recombination and DNA repair, while the RuvA-RuvB complex plays an important role in the rescue of blocked DNA replication forks via replication fork reversal (RFR). RuvA specifically binds to HJ cruciform DNA, conferring on it an open structure. The RuvB hexamer acts as an ATP-dependent pump, pulling dsDNA into and through the RuvAB complex. RuvB forms 2 homohexamers on either side of HJ DNA bound by 1 or 2 RuvA tetramers; 4 subunits per hexamer contact DNA at a time. Coordinated motions by a converter formed by DNA-disengaged RuvB subunits stimulates ATP hydrolysis and nucleotide exchange. Immobilization of the converter enables RuvB to convert the ATP-contained energy into a lever motion, pulling 2 nucleotides of DNA out of the RuvA tetramer per ATP hydrolyzed, thus driving DNA branch migration. The RuvB motors rotate together with the DNA substrate, which together with the progressing nucleotide cycle form the mechanistic basis for DNA recombination by continuous HJ branch migration. Branch migration allows RuvC to scan DNA until it finds its consensus sequence, where it cleaves and resolves cruciform DNA. The protein is Holliday junction branch migration complex subunit RuvB of Burkholderia ambifaria (strain ATCC BAA-244 / DSM 16087 / CCUG 44356 / LMG 19182 / AMMD) (Burkholderia cepacia (strain AMMD)).